The following is a 148-amino-acid chain: uncharacterized protein (148 aa).

Helical transmembrane passes span F29–E49, P61–M81, F99–L119, and I121–I141.

It localises to the cell membrane. This is an uncharacterized protein from Bacillus subtilis (strain 168).